Here is a 542-residue protein sequence, read N- to C-terminus: Pre-mRNA-splicing factor 38B (542 aa).

The segment covering 1–12 (MANNSPALTGNS) has biased composition (polar residues). The segment at 1–41 (MANNSPALTGNSQPQHQAAAAVTQQQQQCGGGGGATKPAVS) is disordered. An N-acetylalanine modification is found at alanine 2. Serine 5 is subject to Phosphoserine. Positions 13–28 (QPQHQAAAAVTQQQQQ) are enriched in low complexity. Lysine 228 is modified (N6-acetyllysine). The disordered stretch occupies residues 233–542 (QIKTRPRKIK…KEHKSKDETV (310 aa)). Residues 244–256 (DGKEGIEEIDRHV) show a composition bias toward basic and acidic residues. The span at 257-285 (ERRRSRSPRRSLSPRRSPRRSRSRSHHRE) shows a compositional bias: basic residues. Serine 289, serine 291, serine 319, and serine 321 each carry phosphoserine. Residues 292 to 328 (FDRELEREKERQRLEREAKEREKERRRSRSIDRGLDR) are compositionally biased toward basic and acidic residues. The stretch at 293 to 322 (DRELEREKERQRLEREAKEREKERRRSRSI) forms a coiled coil. The span at 329–345 (RRSRSRERHRSRSRSRD) shows a compositional bias: basic residues. Over residues 346-419 (RKGDRRDRDR…DRRHRDDKKE (74 aa)) the composition is skewed to basic and acidic residues. Residues 420-447 (SKKKHSRSRSRERKHRSRSRNAGKRSRS) show a composition bias toward basic residues. The residue at position 445 (serine 445) is a Phosphoserine. A compositionally biased stretch (basic and acidic residues) spans 448-465 (RSKDKSSRHKNESKEKAN). A phosphoserine mark is found at serine 470, serine 472, and serine 478. Composition is skewed to basic and acidic residues over residues 478 to 491 (SVEK…PSRE) and 498 to 520 (RSQD…RQDH). Phosphoserine occurs at positions 523, 525, and 530. Basic and acidic residues predominate over residues 530–542 (SQEKEHKSKDETV).

This sequence belongs to the PRP38 family.

It is found in the nucleus. May be required for pre-mRNA splicing. This Mus musculus (Mouse) protein is Pre-mRNA-splicing factor 38B (Prpf38b).